The chain runs to 214 residues: tRNA (guanine-N(7)-)-methyltransferase (214 aa).

S-adenosyl-L-methionine is bound by residues Asp-35, Glu-60, Asn-87, and Asp-113. Asp-113 is a catalytic residue. Residues Lys-117 and Asp-149 each contribute to the substrate site.

The protein belongs to the class I-like SAM-binding methyltransferase superfamily. TrmB family.

It catalyses the reaction guanosine(46) in tRNA + S-adenosyl-L-methionine = N(7)-methylguanosine(46) in tRNA + S-adenosyl-L-homocysteine. Its pathway is tRNA modification; N(7)-methylguanine-tRNA biosynthesis. In terms of biological role, catalyzes the formation of N(7)-methylguanine at position 46 (m7G46) in tRNA. The polypeptide is tRNA (guanine-N(7)-)-methyltransferase (Prochlorococcus marinus (strain NATL1A)).